The primary structure comprises 568 residues: Urease subunit alpha (568 aa).

Residues 130-568 enclose the Urease domain; it reads GGIDTHIHFI…LPMAQRYFLF (439 aa). Positions 135, 137, and 218 each coordinate Ni(2+). Position 218 is an N6-carboxylysine (Lys-218). Residue His-220 coordinates substrate. His-247 and His-273 together coordinate Ni(2+). The Proton donor role is filled by His-321. Asp-361 is a binding site for Ni(2+).

This sequence belongs to the metallo-dependent hydrolases superfamily. Urease alpha subunit family. Heterotrimer of UreA (gamma), UreB (beta) and UreC (alpha) subunits. Three heterotrimers associate to form the active enzyme. Ni cation serves as cofactor. Carboxylation allows a single lysine to coordinate two nickel ions.

Its subcellular location is the cytoplasm. It carries out the reaction urea + 2 H2O + H(+) = hydrogencarbonate + 2 NH4(+). Its pathway is nitrogen metabolism; urea degradation; CO(2) and NH(3) from urea (urease route): step 1/1. The sequence is that of Urease subunit alpha from Burkholderia multivorans (strain ATCC 17616 / 249).